A 256-amino-acid polypeptide reads, in one-letter code: MALAKRIIPCLDVDNGRVVKGVKFENIRDAGDPVEIARRYDEQGADEITFLDITASVDGRDTTLHTVERMASQVFIPLTVGGGVRSVQDIRNLLNAGADKVSINTAAVFNPEFVGEAADRFGSQCIVVAIDAKKVSAPGEAPRWEIFTHGGRKPTGLDAVLWAKKMEDLGAGEILLTSMDQDGVKSGYDLGVTRAISEAVNVPVIASGGVGNLEHLAAGILEGKADAVLAASIFHFGEYTVPEAKAYLASRGIVVR.

Catalysis depends on residues D12 and D131.

The protein belongs to the HisA/HisF family. As to quaternary structure, heterodimer of HisH and HisF.

It is found in the cytoplasm. The catalysed reaction is 5-[(5-phospho-1-deoxy-D-ribulos-1-ylimino)methylamino]-1-(5-phospho-beta-D-ribosyl)imidazole-4-carboxamide + L-glutamine = D-erythro-1-(imidazol-4-yl)glycerol 3-phosphate + 5-amino-1-(5-phospho-beta-D-ribosyl)imidazole-4-carboxamide + L-glutamate + H(+). The protein operates within amino-acid biosynthesis; L-histidine biosynthesis; L-histidine from 5-phospho-alpha-D-ribose 1-diphosphate: step 5/9. Functionally, IGPS catalyzes the conversion of PRFAR and glutamine to IGP, AICAR and glutamate. The HisF subunit catalyzes the cyclization activity that produces IGP and AICAR from PRFAR using the ammonia provided by the HisH subunit. In Pseudomonas aeruginosa (strain ATCC 15692 / DSM 22644 / CIP 104116 / JCM 14847 / LMG 12228 / 1C / PRS 101 / PAO1), this protein is Imidazole glycerol phosphate synthase subunit hisF1 (hisF1).